The chain runs to 1354 residues: MSTGDSFETRFEKIDNLLRDPKSEVNSDCLLDGLDALVYDLDFPALRKNKNIDNFLSRYKDTINKIRDLRMKAEDYEVVKVIGRGAFGEVQLVRHKSTRKVYAMKLLSKFEMIKRSDSAFFWEERDIMAFANSPWVVQLFYAFQDDRYLYMVMEYMPGGDLVNLMSNYDVPEKWARFYTAEVVLALDAIHSMGFIHRDVKPDNMLLDKSGHLKLADFGTCMKMNKEGMVRCDTAVGTPDYISPEVLKSQGGDGYYGRECDWWSVGVFLYEMLVGDTPFYADSLVGTYSKIMNHKNSLTFPDDNDISKEAKNLICAFLTDREVRLGRNGVEEIKRHLFFKNDQWAWETLRDTVAPVVPDLSSDIDTSNFDDLEEDKGDEETFPIPKAFVGNQLPFVGFTYYSNRRYLSPANPNDNRTSSNVDKSLQENLQKTIYKLEEQLHNEMQLKDEMEQKCRTSNIKLDKIMKELDEEGNQRRNLESTVSQIEKEKMLLQHRINEYQRKAEQENEKRRNVENEVSTLKDQLEDLKKVSQNSQLANEKLAQLQKQLEEANDLLRTESDTAVRLRKSHTEMSKSISQLESLNRELQERNRILENSKSQTDKDYYQLQAVLEAERRDRGHDSEMIGDLQARITSLQEEVKHLKYNLERMEGERKEAQDMLNHSEKEKNNLEIDLNYKLKSLQQRLEQEVNEHKVTKARLTDKHQSIEEAKSVAMCEMEKKLKEEREAREKAENRVVQIEKQCSMLDVDLKQSQQKLEHLTENKERMEDEVKNLTLQLEQESNKRLLLQNELKTQAFEADNLKGLEKQMKQEINTLLEAKRLLEFELAQLTKQYRGNEGQMRELQDQLEAEQYFSTLYKTQVKELKEEIEEKNRENLKKIQELQNEKETLATQLDLAETKAESEQLARGLLEEQYFELTQESKKAASRNRQEITDKDHAVSRLEETNSILTKDIELLRKENEELTDKMRKSEEEYKLQKEEEISNLKATYEKNINTERTLKTQAVNKLAEIMNRKDFKIDKKKANTQDLRKKEKENRKLQLELNQEREKFNQMVVKHQKELNDMQAQLVEECTHRNELQMQLASKESDIEQLRAKLSDLSDSTSVASFPSADETDPNLPESRIEGWLSVPNRGNIKRYGWKKQYVVVSSKKILFYNDEQDKEQSNPSMVLDIDKLFHVRPVTQGDVYRAETEEIPKIFQILYANEGECRKDVEVEPVQQAEKTNFQNHKGHEFIPTLYHFPANCEACAKPLWHVFKPPPALECRRCHVKCHRDHLDKKEDLISPCKVSYDVTSARDMLLLACSQDEQKKWVTHLVKKIPKNPPSGFVRASPRTLSTRSTANQSFRKVVKNTSGKTS.

At Ser2 the chain carries N-acetylserine. Positions 76–338 (YEVVKVIGRG…VEEIKRHLFF (263 aa)) constitute a Protein kinase domain. ATP contacts are provided by residues 82–90 (IGRGAFGEV) and Lys105. Asp198 acts as the Proton acceptor in catalysis. Positions 341–409 (DQWAWETLRD…YSNRRYLSPA (69 aa)) constitute an AGC-kinase C-terminal domain. The interaction with FHOD1 stretch occupies residues 368–727 (FDDLEEDKGD…KKLKEEREAR (360 aa)). A coiled-coil region spans residues 422-692 (KSLQENLQKT…RLEQEVNEHK (271 aa)). An REM-1 domain is found at 479–556 (STVSQIEKEK…LEEANDLLRT (78 aa)). Residues 707–946 (EAKSVAMCEM…AVSRLEETNS (240 aa)) are SHROOM3 binding. In terms of domain architecture, RhoBD spans 949-1015 (TKDIELLRKE…LAEIMNRKDF (67 aa)). Residues 998–1010 (LKTQAVNKLAEIM) are RHOA binding. A coiled-coil region spans residues 1011–1102 (NRKDFKIDKK…KLSDLSDSTS (92 aa)). The segment at 1101–1120 (TSVASFPSADETDPNLPESR) is disordered. Residues Ser1105 and Ser1108 each carry the phosphoserine modification. Residues 1115–1354 (NLPESRIEGW…VVKNTSGKTS (240 aa)) form an auto-inhibitory region. Positions 1118–1317 (ESRIEGWLSV…WVTHLVKKIP (200 aa)) constitute a PH domain. Residues 1228-1283 (GHEFIPTLYHFPANCEACAKPLWHVFKPPPALECRRCHVKCHRDHLDKKEDLISPC) form a Phorbol-ester/DAG-type zinc finger. Position 1328 is a phosphoserine (Ser1328). A disordered region spans residues 1333 to 1354 (STRSTANQSFRKVVKNTSGKTS).

The protein belongs to the protein kinase superfamily. AGC Ser/Thr protein kinase family. Homodimer. Interacts with RHOA (activated by GTP), RHOB, RHOC, GEM, MYLC2B, RHOE, PPP1R12A, LIMK1, LIMK2, TSG101, CHORDC1, DAPK3, PFN1, PTEN and JIP3. Interacts with FHOD1 in a Src-dependent manner. Interacts with ITGB1BP1 (via N-terminus and PTB domain). Interacts with SHROOM3. Mg(2+) serves as cofactor. In terms of processing, autophosphorylated on serine and threonine residues. Post-translationally, cleaved by caspase-3 during apoptosis. This leads to constitutive activation of the kinase and membrane blebbing. In terms of tissue distribution, detected in corneal epithelium.

Its subcellular location is the cytoplasm. The protein localises to the cytoskeleton. It localises to the microtubule organizing center. The protein resides in the centrosome. It is found in the centriole. Its subcellular location is the golgi apparatus membrane. The protein localises to the cell projection. It localises to the bleb. The protein resides in the cell membrane. It is found in the lamellipodium. Its subcellular location is the ruffle. The catalysed reaction is L-seryl-[protein] + ATP = O-phospho-L-seryl-[protein] + ADP + H(+). It catalyses the reaction L-threonyl-[protein] + ATP = O-phospho-L-threonyl-[protein] + ADP + H(+). Activated by RHOA binding. Inhibited by Y-27632. Protein kinase which is a key regulator of the actin cytoskeleton and cell polarity. Involved in regulation of smooth muscle contraction, actin cytoskeleton organization, stress fiber and focal adhesion formation, neurite retraction, cell adhesion and motility via phosphorylation of DAPK3, GFAP, LIMK1, LIMK2, MYL9/MLC2, TPPP, PFN1 and PPP1R12A. Phosphorylates FHOD1 and acts synergistically with it to promote SRC-dependent non-apoptotic plasma membrane blebbing. Phosphorylates JIP3 and regulates the recruitment of JNK to JIP3 upon UVB-induced stress. Acts as a suppressor of inflammatory cell migration by regulating PTEN phosphorylation and stability. Acts as a negative regulator of VEGF-induced angiogenic endothelial cell activation. Required for centrosome positioning and centrosome-dependent exit from mitosis. Plays a role in terminal erythroid differentiation. Inhibits podocyte motility via regulation of actin cytoskeletal dynamics and phosphorylation of CFL1. Promotes keratinocyte terminal differentiation. Involved in osteoblast compaction through the fibronectin fibrillogenesis cell-mediated matrix assembly process, essential for osteoblast mineralization. May regulate closure of the eyelids and ventral body wall by inducing the assembly of actomyosin bundles. The sequence is that of Rho-associated protein kinase 1 (ROCK1) from Oryctolagus cuniculus (Rabbit).